We begin with the raw amino-acid sequence, 455 residues long: J protein JJJ2 (455 aa).

A J domain is found at 12-76; the sequence is TYYSILGVPT…QLRAEYDKKL (65 aa). The segment at 104 to 241 is disordered; it reads RNSKPYEQQP…RKKSEKKATP (138 aa). Positions 133–144 are enriched in low complexity; sequence NSNPHNENSSNN. The span at 156-168 shows a compositional bias: basic and acidic residues; that stretch reads TLSKDSEDKHGTD.

The protein localises to the cytoplasm. It is found in the nucleus. The sequence is that of J protein JJJ2 (JJJ2) from Candida glabrata (strain ATCC 2001 / BCRC 20586 / JCM 3761 / NBRC 0622 / NRRL Y-65 / CBS 138) (Yeast).